We begin with the raw amino-acid sequence, 101 residues long: Small ribosomal subunit protein uS14 (101 aa).

This sequence belongs to the universal ribosomal protein uS14 family. As to quaternary structure, part of the 30S ribosomal subunit. Contacts proteins S3 and S10.

Binds 16S rRNA, required for the assembly of 30S particles and may also be responsible for determining the conformation of the 16S rRNA at the A site. This chain is Small ribosomal subunit protein uS14, found in Haemophilus ducreyi (strain 35000HP / ATCC 700724).